An 801-amino-acid polypeptide reads, in one-letter code: Putative mRNA-capping enzyme P5 (801 aa).

This sequence belongs to the phytoreovirus protein P5 family.

Its subcellular location is the virion. The protein localises to the host cytoplasm. It catalyses the reaction a 5'-end diphospho-ribonucleoside in mRNA + GTP + H(+) = a 5'-end (5'-triphosphoguanosine)-ribonucleoside in mRNA + diphosphate. It functions in the pathway mRNA processing; mRNA capping. Functionally, enzyme involved in mRNA capping (Potential). Binds to GTP and might have guanylyltransferase activity. Together with the RNA-directed RNA polymerase P1 and protein P7, forms an transcriptional complex positioned near the channels situated at each of the five-fold vertices of the core. This Alopecurus aequalis (Barnyard grass) protein is Putative mRNA-capping enzyme P5.